A 243-amino-acid polypeptide reads, in one-letter code: ATP synthase subunit a (243 aa).

7 consecutive transmembrane segments (helical) span residues 29-49 (NASL…YIGL), 54-74 (IIPN…VSTI), 89-109 (VFTI…PLGF), 114-134 (HIAV…IIGF), 144-164 (ILLP…IELF), 182-202 (IAGH…NIFL), and 208-228 (IFII…AYIF).

It belongs to the ATPase A chain family. In terms of assembly, F-type ATPases have 2 components, CF(1) - the catalytic core - and CF(0) - the membrane proton channel. CF(1) has five subunits: alpha(3), beta(3), gamma(1), delta(1), epsilon(1). CF(0) has three main subunits: a(1), b(2) and c(9-12). The alpha and beta chains form an alternating ring which encloses part of the gamma chain. CF(1) is attached to CF(0) by a central stalk formed by the gamma and epsilon chains, while a peripheral stalk is formed by the delta and b chains.

The protein resides in the cell inner membrane. Key component of the proton channel; it plays a direct role in the translocation of protons across the membrane. This chain is ATP synthase subunit a, found in Ehrlichia canis (strain Jake).